A 544-amino-acid polypeptide reads, in one-letter code: Histone-arginine methyltransferase CARMER (544 aa).

The SAM-dependent MTase PRMT-type domain maps to 150-459 (ASQYFQFYGY…QSYDVTIDLH (310 aa)). Positions 163, 172, 196, 218, 247, and 275 each coordinate S-adenosyl-L-methionine. Over residues 505–520 (DTQQQQQGSRNSNSML) the composition is skewed to polar residues. Residues 505–527 (DTQQQQQGSRNSNSMLNGGLSVN) form a disordered region. The residue at position 514 (R514) is an Asymmetric dimethylarginine; by autocatalysis.

This sequence belongs to the class I-like SAM-binding methyltransferase superfamily. Protein arginine N-methyltransferase family. In terms of assembly, homodimer. Post-translationally, the dimethylated protein is the major form.

Its subcellular location is the cytoplasm. The protein localises to the nucleus. The catalysed reaction is L-arginyl-[protein] + 2 S-adenosyl-L-methionine = N(omega),N(omega)-dimethyl-L-arginyl-[protein] + 2 S-adenosyl-L-homocysteine + 2 H(+). Methylates (mono- and asymmetric dimethylation) the guanidino nitrogens of arginyl residues in proteins. May methylate histone H3 at 'Arg-17' and activate transcription via chromatin remodeling. The polypeptide is Histone-arginine methyltransferase CARMER (Art4) (Drosophila grimshawi (Hawaiian fruit fly)).